Consider the following 582-residue polypeptide: Aspartate--tRNA ligase (582 aa).

Residue Glu-174 coordinates L-aspartate. An aspartate region spans residues Gln-198–Lys-201. Residue Arg-220 participates in L-aspartate binding. ATP is bound by residues Arg-220–Glu-222 and Gln-229. An L-aspartate-binding site is contributed by His-443. Glu-477 is a binding site for ATP. Arg-484 provides a ligand contact to L-aspartate. An ATP-binding site is contributed by Gly-529–Arg-532.

Belongs to the class-II aminoacyl-tRNA synthetase family. Type 1 subfamily. As to quaternary structure, homodimer.

It is found in the cytoplasm. It carries out the reaction tRNA(Asp) + L-aspartate + ATP = L-aspartyl-tRNA(Asp) + AMP + diphosphate. Functionally, catalyzes the attachment of L-aspartate to tRNA(Asp) in a two-step reaction: L-aspartate is first activated by ATP to form Asp-AMP and then transferred to the acceptor end of tRNA(Asp). The protein is Aspartate--tRNA ligase of Streptococcus pyogenes serotype M1.